The following is a 177-amino-acid chain: Phycocyanin-645 beta chain (177 aa).

Y18 lines the mesobiliverdin pocket. Residues K28, N35, and D39 each contribute to the (2R,3E)-phycocyanobilin site. 15,16-dihydrobiliverdin contacts are provided by C50, D54, and C61. 4 residues coordinate (2R,3E)-phycocyanobilin: R77, C82, R84, and D85. Q148 provides a ligand contact to 15,16-dihydrobiliverdin. 3 residues coordinate (2R,3E)-phycocyanobilin: P154, G156, and C158.

Belongs to the phycobiliprotein family. Heterotetramer of 2 different alpha chains and 2 identical beta chains which form 2 alpha-beta heterodimers within the heterotetramer. In terms of processing, contains two phycocyanobilin chromophores, one mesobiliverdin chromophore and one 15,16-dihydrobiliverdin chromophore with binding mediated by both the alpha and beta subunits.

It is found in the plastid. The protein localises to the chloroplast thylakoid membrane. Its function is as follows. Light-harvesting photosynthetic tetrapyrrole chromophore-protein from the phycobiliprotein complex. In Chroomonas sp, this protein is Phycocyanin-645 beta chain.